Here is a 449-residue protein sequence, read N- to C-terminus: Glucose-6-phosphate isomerase (449 aa).

The active-site Proton donor is E290. Active-site residues include H311 and K425.

It belongs to the GPI family.

Its subcellular location is the cytoplasm. The catalysed reaction is alpha-D-glucose 6-phosphate = beta-D-fructose 6-phosphate. The protein operates within carbohydrate biosynthesis; gluconeogenesis. It functions in the pathway carbohydrate degradation; glycolysis; D-glyceraldehyde 3-phosphate and glycerone phosphate from D-glucose: step 2/4. Its function is as follows. Catalyzes the reversible isomerization of glucose-6-phosphate to fructose-6-phosphate. The protein is Glucose-6-phosphate isomerase of Exiguobacterium sibiricum (strain DSM 17290 / CCUG 55495 / CIP 109462 / JCM 13490 / 255-15).